The sequence spans 186 residues: Dihydrofolate reductase (186 aa).

The DHFR domain occupies 3-183; that stretch reads KFSLIVAVCA…IQYQYRIYEK (181 aa). NADP(+) contacts are provided by residues Ala-9 and 15–21; that span reads GIGIKGD. Residue 29 to 34 participates in substrate binding; that stretch reads ELKYFS. 53-55 lines the NADP(+) pocket; it reads RKT. A substrate-binding site is contributed by Arg-69. NADP(+) is bound by residues 75–77 and 116–123; these read TRD and GGNAVYKE.

It belongs to the dihydrofolate reductase family.

It carries out the reaction (6S)-5,6,7,8-tetrahydrofolate + NADP(+) = 7,8-dihydrofolate + NADPH + H(+). It functions in the pathway cofactor biosynthesis; tetrahydrofolate biosynthesis; 5,6,7,8-tetrahydrofolate from 7,8-dihydrofolate: step 1/1. Key enzyme in folate metabolism. Catalyzes an essential reaction for de novo glycine and purine synthesis, and for DNA precursor synthesis. In Aedes albopictus (Asian tiger mosquito), this protein is Dihydrofolate reductase (DHFR).